We begin with the raw amino-acid sequence, 148 residues long: Aspartate carbamoyltransferase regulatory chain (148 aa).

Positions 106, 111, 134, and 137 each coordinate Zn(2+).

The protein belongs to the PyrI family. As to quaternary structure, contains catalytic and regulatory chains. The cofactor is Zn(2+).

Functionally, involved in allosteric regulation of aspartate carbamoyltransferase. The protein is Aspartate carbamoyltransferase regulatory chain of Methanococcus maripaludis (strain C6 / ATCC BAA-1332).